We begin with the raw amino-acid sequence, 473 residues long: Glutamate--tRNA ligase 1 (473 aa).

The short motif at 23–33 (PSPTGLLHVGG) is the 'HIGH' region element. Positions 252-256 (KLSKR) match the 'KMSKS' region motif. Residue Lys255 coordinates ATP.

It belongs to the class-I aminoacyl-tRNA synthetase family. Glutamate--tRNA ligase type 1 subfamily. As to quaternary structure, monomer.

It is found in the cytoplasm. It carries out the reaction tRNA(Glu) + L-glutamate + ATP = L-glutamyl-tRNA(Glu) + AMP + diphosphate. In terms of biological role, catalyzes the attachment of glutamate to tRNA(Glu) in a two-step reaction: glutamate is first activated by ATP to form Glu-AMP and then transferred to the acceptor end of tRNA(Glu). This chain is Glutamate--tRNA ligase 1, found in Granulibacter bethesdensis (strain ATCC BAA-1260 / CGDNIH1).